A 249-amino-acid chain; its full sequence is Zinc finger protein mnm-2 (249 aa).

The segment at 20–65 (PKEELETEEEDEEEDEEEELSSSEVTSENDMETESASSSASSVGQP) is disordered. The segment covering 24 to 52 (LETEEEDEEEDEEEELSSSEVTSENDMET) has biased composition (acidic residues). 3 C2H2-type zinc fingers span residues 168–190 (YRCD…KRIH), 196–218 (FKCE…RLTH), and 224–246 (YVCG…MRTH).

In terms of tissue distribution, in larva and adult, expressed in the M3 pharyngeal motor neurons, extrapharyngeal neurons in the head, the PQR tail neurons, rectal cells, vulva cells, the spermetheca-uterine valve, body wall muscle cells and neurons of the ventral nerve cord. In the embryo, expressed in pharyngeal cells, extrapharyngeal head neurons and within the tail. Expressed in body wall muscle cells during late embryonic stages. Expressed in the mother cells of the M2 and M3 pharyngeal motor neurons precursor cells at the embryonic bean stage and subsequently in the M2 and M3 cells as they are born. Expression is sustained only in the two M3 cells up to at least the 5-day-old adult. In contrast, expression gradually declines in the M2 cells beginning from the time of their birth, and is completely undetectable by the time of hatching.

The protein localises to the nucleus. In terms of biological role, required in the M3 pharyngeal motor neuron to guide the growth cone of the sister M2 motor neuron during axon development. In Caenorhabditis elegans, this protein is Zinc finger protein mnm-2.